The following is a 1591-amino-acid chain: Dicer-like protein 1 (1591 aa).

Basic and acidic residues-rich tracts occupy residues 1 to 20 and 41 to 52; these read MEVH…RYDD and SKPRKISERKRA. The interval 1–52 is disordered; it reads MEVHDGLKSPDKAAKSRYDDDRIDQDSEDEAVRLVANPDPSKPRKISERKRA. A Helicase ATP-binding domain is found at 115–298; that stretch reads LFERAKQKNT…SYERATHELE (184 aa). 128-135 lines the ATP pocket; the sequence is LDTGTGKT. The short motif at 242–245 is the DEAH box element; the sequence is DEAH. Residues 439 to 607 enclose the Helicase C-terminal domain; it reads KLIEILAECF…CLSLPKDRIM (169 aa). The 91-residue stretch at 639–729 folds into the Dicer dsRNA-binding fold domain; that stretch reads SLVVLAEFVA…KSTLAKVLPA (91 aa). Residues 888–1012 form the PAZ domain; it reads TTTDRVPYNF…LVLETLLISQ (125 aa). RNase III domains follow at residues 1050-1190 and 1243-1406; these read IDIA…LTAQ and CSQI…VDTG. 3 residues coordinate Mg(2+): glutamate 1283, aspartate 1392, and glutamate 1395. A DRBM domain is found at 1440-1514; sequence THITSIITTQ…AKQAVAIYED (75 aa). 4 residues coordinate Zn(2+): cysteine 1452, histidine 1485, cysteine 1526, and cysteine 1528.

It belongs to the helicase family. Dicer subfamily. Requires Mg(2+) as cofactor. It depends on Mn(2+) as a cofactor.

Functionally, dicer-like endonuclease which seems not to be involved in cleaving double-stranded RNA in the RNA interference (RNAi) pathway, contrary to its DCL2 counterpart. In Pyricularia oryzae (strain 70-15 / ATCC MYA-4617 / FGSC 8958) (Rice blast fungus), this protein is Dicer-like protein 1 (DCL1).